The following is a 256-amino-acid chain: Zinc metalloprotease (256 aa).

The Proton donor role is filled by H74.

Belongs to the peptidase M4 family. The cofactor is Zn(2+).

The protein resides in the secreted. Functionally, may play a role in ulcer formation. Proteolytic digestion of gastric mucus has been suggested as an important mechanism by which its pathogenicity is at least partly exerted. In Helicobacter pylori (Campylobacter pylori), this protein is Zinc metalloprotease (hap).